The chain runs to 380 residues: Transaldolase (380 aa).

The active-site Schiff-base intermediate with substrate is the Lys-141.

The protein belongs to the transaldolase family. Type 2 subfamily.

The protein localises to the cytoplasm. It carries out the reaction D-sedoheptulose 7-phosphate + D-glyceraldehyde 3-phosphate = D-erythrose 4-phosphate + beta-D-fructose 6-phosphate. The protein operates within carbohydrate degradation; pentose phosphate pathway; D-glyceraldehyde 3-phosphate and beta-D-fructose 6-phosphate from D-ribose 5-phosphate and D-xylulose 5-phosphate (non-oxidative stage): step 2/3. Its function is as follows. Transaldolase is important for the balance of metabolites in the pentose-phosphate pathway. This is Transaldolase from Trichodesmium erythraeum (strain IMS101).